The chain runs to 147 residues: Hemoglobin subunit epsilon (147 aa).

Residues 3–147 (HFTAEEKSTI…VATALAHKYH (145 aa)) enclose the Globin domain. 2 positions are modified to phosphoserine: Ser14 and Ser51. Heme b-binding residues include His64 and His93.

The protein belongs to the globin family. In terms of assembly, heterotetramer of two alpha chains and two epsilon chains in early embryonic hemoglobin Gower-2; two zeta chains and two epsilon chains in early embryonic hemoglobin Gower-1. In terms of tissue distribution, red blood cells.

Its function is as follows. The epsilon chain is a beta-type chain of early mammalian embryonic hemoglobin. The protein is Hemoglobin subunit epsilon (HBE1) of Microcebus murinus (Gray mouse lemur).